We begin with the raw amino-acid sequence, 99 residues long: A-type ATP synthase subunit F (99 aa).

The protein belongs to the V-ATPase F subunit family. As to quaternary structure, has multiple subunits with at least A(3), B(3), C, D, E, F, H, I and proteolipid K(x).

It is found in the cell membrane. Functionally, component of the A-type ATP synthase that produces ATP from ADP in the presence of a proton gradient across the membrane. The chain is A-type ATP synthase subunit F from Methanothrix thermoacetophila (strain DSM 6194 / JCM 14653 / NBRC 101360 / PT) (Methanosaeta thermophila).